Here is a 216-residue protein sequence, read N- to C-terminus: FGFR1 oncogene partner 2 homolog (216 aa).

Coiled-coil stretches lie at residues 33-102 (TTTL…LIMS) and 131-185 (SKEL…ITRA). The tract at residues 193 to 216 (EDAAESSSHSASSVPNTDLSLRKS) is disordered. Over residues 206–216 (VPNTDLSLRKS) the composition is skewed to polar residues.

It belongs to the SIKE family.

The protein resides in the cytoplasm. This is FGFR1 oncogene partner 2 homolog (fgfr1op2) from Xenopus tropicalis (Western clawed frog).